Reading from the N-terminus, the 263-residue chain is Glutamate 5-kinase (263 aa).

ATP is bound at residue K14. Positions 52, 137, and 149 each coordinate substrate. Residues 169–170 and 211–217 contribute to the ATP site; these read SD and TGGIVTK.

Belongs to the glutamate 5-kinase family. As to quaternary structure, homotetramer; oligomerization is not affected by L-proline feedback inhibition. It depends on Mg(2+) as a cofactor.

The enzyme catalyses L-glutamate + ATP = L-glutamyl 5-phosphate + ADP. It functions in the pathway amino-acid biosynthesis; L-proline biosynthesis; L-glutamate 5-semialdehyde from L-glutamate: step 1/2. With respect to regulation, inhibited by L-proline as part of a negative feedback loop. Also inhibited by L-proline analogs 3,4-dehydro-L-proline, L-azetidine-2-carboxylic acid and L-4-thiazolidine carboxylic acid. In terms of biological role, catalyzes the transfer of a phosphate group to glutamate to form L-glutamate 5-phosphate. May be important for growth and survival. This chain is Glutamate 5-kinase, found in Leishmania donovani.